The primary structure comprises 178 residues: Peptide deformylase 2 (178 aa).

Fe cation is bound by residues C101 and H143. E144 is an active-site residue. Position 147 (H147) interacts with Fe cation.

It belongs to the polypeptide deformylase family. Fe(2+) is required as a cofactor.

The enzyme catalyses N-terminal N-formyl-L-methionyl-[peptide] + H2O = N-terminal L-methionyl-[peptide] + formate. Functionally, removes the formyl group from the N-terminal Met of newly synthesized proteins. Requires at least a dipeptide for an efficient rate of reaction. N-terminal L-methionine is a prerequisite for activity but the enzyme has broad specificity at other positions. This chain is Peptide deformylase 2, found in Pseudomonas putida (strain ATCC 47054 / DSM 6125 / CFBP 8728 / NCIMB 11950 / KT2440).